Here is a 486-residue protein sequence, read N- to C-terminus: Protein nucleotidyltransferase YdiU (486 aa).

Residues Gly90, Gly92, Arg93, Lys113, Asp125, Gly126, Arg176, and Arg183 each contribute to the ATP site. Asp252 serves as the catalytic Proton acceptor. Positions 253 and 262 each coordinate Mg(2+). An ATP-binding site is contributed by Asp262.

It belongs to the SELO family. Mg(2+) is required as a cofactor. Requires Mn(2+) as cofactor.

It catalyses the reaction L-seryl-[protein] + ATP = 3-O-(5'-adenylyl)-L-seryl-[protein] + diphosphate. The enzyme catalyses L-threonyl-[protein] + ATP = 3-O-(5'-adenylyl)-L-threonyl-[protein] + diphosphate. The catalysed reaction is L-tyrosyl-[protein] + ATP = O-(5'-adenylyl)-L-tyrosyl-[protein] + diphosphate. It carries out the reaction L-histidyl-[protein] + UTP = N(tele)-(5'-uridylyl)-L-histidyl-[protein] + diphosphate. It catalyses the reaction L-seryl-[protein] + UTP = O-(5'-uridylyl)-L-seryl-[protein] + diphosphate. The enzyme catalyses L-tyrosyl-[protein] + UTP = O-(5'-uridylyl)-L-tyrosyl-[protein] + diphosphate. Nucleotidyltransferase involved in the post-translational modification of proteins. It can catalyze the addition of adenosine monophosphate (AMP) or uridine monophosphate (UMP) to a protein, resulting in modifications known as AMPylation and UMPylation. In Pseudomonas putida (strain W619), this protein is Protein nucleotidyltransferase YdiU.